The chain runs to 303 residues: Coenzyme PQQ synthesis protein B (303 aa).

The protein belongs to the PqqB family.

Its pathway is cofactor biosynthesis; pyrroloquinoline quinone biosynthesis. Its function is as follows. May be involved in the transport of PQQ or its precursor to the periplasm. This chain is Coenzyme PQQ synthesis protein B, found in Pseudomonas syringae pv. tomato (strain ATCC BAA-871 / DC3000).